A 127-amino-acid chain; its full sequence is UPF0102 protein Geob_1494 (127 aa).

It belongs to the UPF0102 family.

This chain is UPF0102 protein Geob_1494, found in Geotalea daltonii (strain DSM 22248 / JCM 15807 / FRC-32) (Geobacter daltonii).